Here is a 388-residue protein sequence, read N- to C-terminus: Chorismate synthase (388 aa).

Residues Arg39 and Arg45 each contribute to the NADP(+) site. FMN-binding positions include 130–132 (RSS), 251–252 (NA), Gly296, 311–315 (KPIPT), and Arg337.

Belongs to the chorismate synthase family. In terms of assembly, homotetramer. FMNH2 serves as cofactor.

It catalyses the reaction 5-O-(1-carboxyvinyl)-3-phosphoshikimate = chorismate + phosphate. It functions in the pathway metabolic intermediate biosynthesis; chorismate biosynthesis; chorismate from D-erythrose 4-phosphate and phosphoenolpyruvate: step 7/7. In terms of biological role, catalyzes the anti-1,4-elimination of the C-3 phosphate and the C-6 proR hydrogen from 5-enolpyruvylshikimate-3-phosphate (EPSP) to yield chorismate, which is the branch point compound that serves as the starting substrate for the three terminal pathways of aromatic amino acid biosynthesis. This reaction introduces a second double bond into the aromatic ring system. This is Chorismate synthase from Streptococcus agalactiae serotype Ia (strain ATCC 27591 / A909 / CDC SS700).